A 107-amino-acid polypeptide reads, in one-letter code: Thioredoxin (107 aa).

The Thioredoxin domain maps to 2–107; the sequence is SVSQVTDASF…LESTLNKYIS (106 aa). Active-site nucleophile residues include Cys-31 and Cys-34. Residues Cys-31 and Cys-34 are joined by a disulfide bond.

Belongs to the thioredoxin family.

It localises to the plastid. It is found in the chloroplast. Functionally, participates in various redox reactions through the reversible oxidation of its active center dithiol to a disulfide and catalyzes dithiol-disulfide exchange reactions. The sequence is that of Thioredoxin (trxA) from Porphyra purpurea (Red seaweed).